The following is a 98-amino-acid chain: Large ribosomal subunit protein uL23 (98 aa).

It belongs to the universal ribosomal protein uL23 family. As to quaternary structure, part of the 50S ribosomal subunit. Contacts protein L29, and trigger factor when it is bound to the ribosome.

Its function is as follows. One of the early assembly proteins it binds 23S rRNA. One of the proteins that surrounds the polypeptide exit tunnel on the outside of the ribosome. Forms the main docking site for trigger factor binding to the ribosome. The polypeptide is Large ribosomal subunit protein uL23 (Thioalkalivibrio sulfidiphilus (strain HL-EbGR7)).